The following is a 514-amino-acid chain: Embryonic protein UVS.2 (514 aa).

Positions 1-19 are cleaved as a signal peptide; that stretch reads MDVKISAILLACIIQYAVS. A Peptidase M12A domain is found at 90 to 286; the sequence is SAINDARFLW…SKINKLYECN (197 aa). N-linked (GlcNAc...) asparagine glycosylation occurs at Asn112. 6 disulfide bridges follow: Cys137-Cys285, Cys158-Cys178, Cys288-Cys314, Cys340-Cys363, Cys402-Cys428, and Cys455-Cys475. His186 contacts Zn(2+). Glu187 is a catalytic residue. 2 residues coordinate Zn(2+): His190 and His196. The N-linked (GlcNAc...) asparagine glycan is linked to Asn199. 2 consecutive CUB domains span residues 288–400 and 402–513; these read CSNL…YGSI and CGGA…YTFV. N-linked (GlcNAc...) asparagine glycans are attached at residues Asn421, Asn427, and Asn464.

Requires Zn(2+) as cofactor.

The sequence is that of Embryonic protein UVS.2 from Xenopus laevis (African clawed frog).